Consider the following 180-residue polypeptide: ATP-dependent protease subunit HslV (180 aa).

T5 is a catalytic residue. Residues G165, C168, and T171 each contribute to the Na(+) site.

Belongs to the peptidase T1B family. HslV subfamily. As to quaternary structure, a double ring-shaped homohexamer of HslV is capped on each side by a ring-shaped HslU homohexamer. The assembly of the HslU/HslV complex is dependent on binding of ATP.

The protein resides in the cytoplasm. It catalyses the reaction ATP-dependent cleavage of peptide bonds with broad specificity.. Allosterically activated by HslU binding. Protease subunit of a proteasome-like degradation complex believed to be a general protein degrading machinery. The sequence is that of ATP-dependent protease subunit HslV from Helicobacter hepaticus (strain ATCC 51449 / 3B1).